Reading from the N-terminus, the 363-residue chain is MTHQYPALTTEQKRELQDIAQRIVAPGKGILAADESTGSMAKRLNPIGVENTEENRRLYRQLLFTADERMDKCIGGVIFFHETLYQKADDGTPFAKMIKDRGIVVGIKVDKGVVPLAGTNGETTTQGLDGLSERCAQYKKDGADFAKWRSVLKISETSPSELAIMENANVLARYASICQQNGIVPIVEPEILPDGDHDLKRCQYVTEKVLAACYKALSDHHVYLEGTLLKPNMVTAGHSCPTKFSNQEIAMATVTALRRTVPPAVTGVTFLSGGQSEEEASINLNAINNCPLTKPWALTFSYGRALQASALSAWRGVKENEKAATEEFLKRAEANGLAAQGKYVSSGMDGSAGQSLYVANHAY.

Positions 56 and 147 each coordinate substrate. The active-site Schiff-base intermediate with dihydroxyacetone-P is Lys230.

The protein belongs to the class I fructose-bisphosphate aldolase family. Homotetramer. In terms of tissue distribution, expressed in brain but not in liver or muscle.

It catalyses the reaction beta-D-fructose 1,6-bisphosphate = D-glyceraldehyde 3-phosphate + dihydroxyacetone phosphate. It participates in carbohydrate degradation; glycolysis; D-glyceraldehyde 3-phosphate and glycerone phosphate from D-glucose: step 4/4. The sequence is that of Fructose-bisphosphate aldolase C (aldoc) from Carassius auratus (Goldfish).